Here is a 301-residue protein sequence, read N- to C-terminus: Multifunctional dioxygenase prhA (301 aa).

Fe cation is bound by residues histidine 130, aspartate 132, and histidine 214.

The protein belongs to the PhyH family. Homodimer. It depends on Fe cation as a cofactor.

It carries out the reaction preaustinoid A1 + 2-oxoglutarate + O2 = berkeleyone B + succinate + CO2 + H2O. The enzyme catalyses berkeleyone B + 2-oxoglutarate + O2 = berkeleydione + succinate + CO2 + H2O. The catalysed reaction is preaustinoid A + 2 2-oxoglutarate + 2 O2 = berkeleytrione + 2 succinate + 2 CO2 + H2O. The protein operates within secondary metabolite biosynthesis; terpenoid biosynthesis. In terms of biological role, multifunctional dioxygenase; part of the gene cluster that mediates the biosynthesis of paraherquonin, a meroterpenoid with a unique, highly congested hexacyclic molecular architecture. The first step of the pathway is the synthesis of 3,5-dimethylorsellinic acid (DMOA) by the polyketide synthase prhL. Synthesis of DMOA is followed by farnesylation by the prenyltransferase prhE, methylesterification by the methyl-transferase prhM, epoxidation of the prenyl chain by the flavin-dependent monooxygenase prhF, and cyclization of the farnesyl moiety by the terpene cyclase prhH, to yield the tetracyclic intermediate, protoaustinoid A. The short chain dehydrogenase prhI then oxidizes the C-3 alcohol group of the terpene cyclase product to transform protoaustinoid A into protoaustinoid B. The FAD-binding monooxygenase prhJ catalyzes the oxidation of protoaustinoid B into preaustinoid A which is further oxidized into preaustinoid A1 by FAD-binding monooxygenase phrK. Finally, prhA leads to berkeleydione via the berkeleyone B intermediate. PrhA is a multifunctional dioxygenase that first desaturates at C5-C6 to form berkeleyone B, followed by rearrangement of the A/B-ring to form the cycloheptadiene moiety in berkeleydione. Berkeleydione serves as the key intermediate for the biosynthesis of paraherquonin as well as many other meroterpenoids. The cytochrome P450 monooxygenases prhB, prhD, and prhN, as well as the isomerase prhC, are probably involved in the late stage of paraherquonin biosynthesis, after the production of berkeleydione. Especially prhC might be a multifunctional enzyme that catalyzes the D-ring expansion via intramolecular methoxy rearrangement, as well as the hydrolysis of the expanded D-ring. This Penicillium brasilianum protein is Multifunctional dioxygenase prhA.